The sequence spans 287 residues: T-cell ecto-ADP-ribosyltransferase 1 (287 aa).

The signal sequence occupies residues 1 to 20 (MPSNNFKFFLTWWLTQQVTG). 3 disulfides stabilise this stretch: cysteine 41–cysteine 246, cysteine 80–cysteine 201, and cysteine 141–cysteine 193. One can recognise a TR mART core domain in the interval 61-241 (EELKLEWEKA…ISLDSPKRKK (181 aa)). NAD(+) contacts are provided by tyrosine 98 and arginine 146. Catalysis depends on residues arginine 146 and serine 167. Asparagine 171 is a glycosylation site (N-linked (GlcNAc...) asparagine). An NAD(+)-binding site is contributed by serine 202. Residue glutamate 209 is part of the active site. A glycan (N-linked (GlcNAc...) asparagine) is linked at asparagine 256. Serine 258 carries the GPI-anchor amidated serine lipid modification. A propeptide spans 259 to 287 (SLGSRESCVSLFLVVLLGLLVQQLTLAEP) (removed in mature form).

It belongs to the Arg-specific ADP-ribosyltransferase family. It is proposed that in the absence of reducing agents, a disulfide bond is formed between Cys-80 and Cys-201, leading to a conformational change that reduces the catalytic rate of NAD glycohydrolysis. In terms of tissue distribution, expressed in spleen, intestine and thymus.

It localises to the cell membrane. The enzyme catalyses L-arginyl-[protein] + NAD(+) = N(omega)-(ADP-D-ribosyl)-L-arginyl-[protein] + nicotinamide + H(+). The catalysed reaction is NAD(+) + H2O = ADP-D-ribose + nicotinamide + H(+). Functionally, has both ADP-ribosyltransferase activity and thiol-dependent NAD(+) glycohydrolase activity. The polypeptide is T-cell ecto-ADP-ribosyltransferase 1 (Art2a) (Mus musculus (Mouse)).